The following is a 331-amino-acid chain: tRNA-cytidine(32) 2-sulfurtransferase (331 aa).

Residues 1-33 are disordered; the sequence is MNAPHMNDTAADAATLDDAAAPAGRPALTRREQ. The span at 8–23 shows a compositional bias: low complexity; that stretch reads DTAADAATLDDAAAPA. A PP-loop motif motif is present at residues 71–76; the sequence is SGGKDS. Cys-146, Cys-149, and Cys-237 together coordinate [4Fe-4S] cluster.

The protein belongs to the TtcA family. Homodimer. Mg(2+) is required as a cofactor. The cofactor is [4Fe-4S] cluster.

The protein localises to the cytoplasm. It carries out the reaction cytidine(32) in tRNA + S-sulfanyl-L-cysteinyl-[cysteine desulfurase] + AH2 + ATP = 2-thiocytidine(32) in tRNA + L-cysteinyl-[cysteine desulfurase] + A + AMP + diphosphate + H(+). Its pathway is tRNA modification. Functionally, catalyzes the ATP-dependent 2-thiolation of cytidine in position 32 of tRNA, to form 2-thiocytidine (s(2)C32). The sulfur atoms are provided by the cysteine/cysteine desulfurase (IscS) system. The protein is tRNA-cytidine(32) 2-sulfurtransferase of Burkholderia cenocepacia (strain HI2424).